The sequence spans 527 residues: Ribosomal protein S6 kinase beta-1 (527 aa).

Positions 1-54 (MRRRRRRDGFYPAPDFRDREAEDMAGVFDIDLDQPEDAGSEDELEEGGQLNESM) are disordered. The TOS motif signature appears at 28–32 (FDIDL). Residues 30–46 (IDLDQPEDAGSEDELEE) show a composition bias toward acidic residues. Residues 91–352 (FELLRVLGKG…AGEVQAHPFF (262 aa)) enclose the Protein kinase domain. Residues 97–105 (LGKGGYGKV) and Lys123 contribute to the ATP site. The active-site Proton acceptor is the Asp218. The residue at position 252 (Thr252) is a Phosphothreonine; by PDPK1. Positions 353–423 (RHINWEELLA…VAPSVLESVK (71 aa)) constitute an AGC-kinase C-terminal domain. Ser394 bears the Phosphoserine mark. At Thr412 the chain carries Phosphothreonine; by MTOR, NEK6 and NEK7. The autoinhibitory domain stretch occupies residues 424-527 (EKFSFEPKIR…PEHLRMNLEL (104 aa)). A phosphoserine mark is found at Ser434 and Ser441. Thr444 is subject to Phosphothreonine. Ser447 and Ser452 each carry phosphoserine. Residue Lys516 is modified to N6-acetyllysine.

This sequence belongs to the protein kinase superfamily. AGC Ser/Thr protein kinase family. S6 kinase subfamily. Interacts with PPP1R9A/neurabin-1. Interacts with RPTOR. Interacts with IRS1. Interacts with EIF3B and EIF3C. Interacts with TRAF4. Interacts with POLDIP3. Interacts (via N-terminus) with IER5. Phosphorylation at Thr-412 is regulated by mTORC1. The phosphorylation at this site is maintained by an agonist-dependent autophosphorylation mechanism. Activated by phosphorylation at Thr-252 by PDPK1. Dephosphorylation by PPP1CC at Thr-412 in mitochondrion.

It localises to the cytoplasm. The protein resides in the synapse. It is found in the synaptosome. Its subcellular location is the mitochondrion outer membrane. The protein localises to the mitochondrion. It carries out the reaction L-seryl-[protein] + ATP = O-phospho-L-seryl-[protein] + ADP + H(+). The enzyme catalyses L-threonyl-[protein] + ATP = O-phospho-L-threonyl-[protein] + ADP + H(+). Inactivated by binding to URI1. Activation requires multiple phosphorylation events on serine/threonine residues. Activation appears to be first mediated by phosphorylation of multiple sites in the autoinhibitory domain, which facilitates phosphorylation at Thr-412, disrupting the autoinhibitory mechanism and allowing phosphorylation of Thr-252 by PDPK1. The active conformation of the kinase is believed to be stabilized by a mechanism involving three conserved phosphorylation sites located in the kinase domain activation loop (Thr-252) and in the AGC-kinase C-terminal domain (Ser-394 in the middle of the tail/linker region and Thr-412 within a hydrophobic motif at its end). Activated by mTORC1; isoform Alpha I and isoform Alpha II are sensitive to rapamycin, which inhibits activating phosphorylation at Thr-412. Activated by PDPK1. Serine/threonine-protein kinase that acts downstream of mTOR signaling in response to growth factors and nutrients to promote cell proliferation, cell growth and cell cycle progression. Regulates protein synthesis through phosphorylation of EIF4B, RPS6 and EEF2K, and contributes to cell survival by repressing the pro-apoptotic function of BAD. Under conditions of nutrient depletion, the inactive form associates with the EIF3 translation initiation complex. Upon mitogenic stimulation, phosphorylation by the mechanistic target of rapamycin complex 1 (mTORC1) leads to dissociation from the EIF3 complex and activation. The active form then phosphorylates and activates several substrates in the pre-initiation complex, including the EIF2B complex and the cap-binding complex component EIF4B. Also controls translation initiation by phosphorylating a negative regulator of EIF4A, PDCD4, targeting it for ubiquitination and subsequent proteolysis. Promotes initiation of the pioneer round of protein synthesis by phosphorylating POLDIP3/SKAR. In response to IGF1, activates translation elongation by phosphorylating EEF2 kinase (EEF2K), which leads to its inhibition and thus activation of EEF2. Also plays a role in feedback regulation of mTORC2 by mTORC1 by phosphorylating MAPKAP1/SIN1, MTOR and RICTOR, resulting in the inhibition of mTORC2 and AKT1 signaling. Also involved in feedback regulation of mTORC1 and mTORC2 by phosphorylating DEPTOR. Mediates cell survival by phosphorylating the pro-apoptotic protein BAD and suppressing its pro-apoptotic function. Phosphorylates mitochondrial URI1 leading to dissociation of a URI1-PPP1CC complex. The free mitochondrial PPP1CC can then dephosphorylate RPS6KB1 at Thr-412, which is proposed to be a negative feedback mechanism for the RPS6KB1 anti-apoptotic function. Mediates TNF-alpha-induced insulin resistance by phosphorylating IRS1 at multiple serine residues, resulting in accelerated degradation of IRS1. In cells lacking functional TSC1-2 complex, constitutively phosphorylates and inhibits GSK3B. May be involved in cytoskeletal rearrangement through binding to neurabin. Phosphorylates and activates the pyrimidine biosynthesis enzyme CAD, downstream of MTOR. Following activation by mTORC1, phosphorylates EPRS and thereby plays a key role in fatty acid uptake by adipocytes and also most probably in interferon-gamma-induced translation inhibition. The polypeptide is Ribosomal protein S6 kinase beta-1 (RPS6KB1) (Bos taurus (Bovine)).